The sequence spans 313 residues: Ribosomal RNA small subunit methyltransferase H (313 aa).

Residues 35–37 (GGH), Asp-55, Phe-81, Asp-103, and Gln-110 each bind S-adenosyl-L-methionine.

The protein belongs to the methyltransferase superfamily. RsmH family.

The protein localises to the cytoplasm. The catalysed reaction is cytidine(1402) in 16S rRNA + S-adenosyl-L-methionine = N(4)-methylcytidine(1402) in 16S rRNA + S-adenosyl-L-homocysteine + H(+). In terms of biological role, specifically methylates the N4 position of cytidine in position 1402 (C1402) of 16S rRNA. The chain is Ribosomal RNA small subunit methyltransferase H from Pseudomonas aeruginosa (strain UCBPP-PA14).